Consider the following 318-residue polypeptide: NADH-ubiquinone oxidoreductase chain 1 (318 aa).

Helical transmembrane passes span 2 to 22 (FMIN…FLTL), 76 to 96 (TLAL…YPLI), 102 to 122 (LLFI…SGWA), 146 to 166 (LAII…STLI), 171 to 191 (YLWL…STLA), 217 to 237 (AGPF…MNAL), 253 to 273 (ETYT…FLWV), and 294 to 314 (LPLT…ASCI).

The protein belongs to the complex I subunit 1 family. As to quaternary structure, core subunit of respiratory chain NADH dehydrogenase (Complex I) which is composed of 45 different subunits.

The protein resides in the mitochondrion inner membrane. The catalysed reaction is a ubiquinone + NADH + 5 H(+)(in) = a ubiquinol + NAD(+) + 4 H(+)(out). In terms of biological role, core subunit of the mitochondrial membrane respiratory chain NADH dehydrogenase (Complex I) which catalyzes electron transfer from NADH through the respiratory chain, using ubiquinone as an electron acceptor. Essential for the catalytic activity and assembly of complex I. In Lemur catta (Ring-tailed lemur), this protein is NADH-ubiquinone oxidoreductase chain 1 (MT-ND1).